A 134-amino-acid chain; its full sequence is Small ribosomal subunit protein uS8 (134 aa).

The protein belongs to the universal ribosomal protein uS8 family. In terms of assembly, part of the 30S ribosomal subunit. Contacts proteins S5 and S12.

One of the primary rRNA binding proteins, it binds directly to 16S rRNA central domain where it helps coordinate assembly of the platform of the 30S subunit. The sequence is that of Small ribosomal subunit protein uS8 from Thermosipho africanus (strain TCF52B).